Consider the following 208-residue polypeptide: 3-demethoxyubiquinol 3-hydroxylase (208 aa).

6 residues coordinate Fe cation: glutamate 57, glutamate 87, histidine 90, glutamate 139, glutamate 171, and histidine 174.

Belongs to the COQ7 family. It depends on Fe cation as a cofactor.

It is found in the cell membrane. It carries out the reaction a 5-methoxy-2-methyl-3-(all-trans-polyprenyl)benzene-1,4-diol + AH2 + O2 = a 3-demethylubiquinol + A + H2O. It participates in cofactor biosynthesis; ubiquinone biosynthesis. Its function is as follows. Catalyzes the hydroxylation of 2-nonaprenyl-3-methyl-6-methoxy-1,4-benzoquinol during ubiquinone biosynthesis. The polypeptide is 3-demethoxyubiquinol 3-hydroxylase (Herbaspirillum seropedicae).